The chain runs to 383 residues: S-adenosylmethionine synthase (383 aa).

H15 serves as a coordination point for ATP. D17 serves as a coordination point for Mg(2+). E43 contacts K(+). L-methionine is bound by residues E56 and Q99. A flexible loop region spans residues 99-109 (QSPDINQGVDR). ATP-binding positions include 164–166 (DAK), 230–231 (RF), D239, 245–246 (RK), A262, and K266. D239 is an L-methionine binding site. K270 lines the L-methionine pocket.

It belongs to the AdoMet synthase family. Homotetramer; dimer of dimers. Requires Mg(2+) as cofactor. It depends on K(+) as a cofactor.

Its subcellular location is the cytoplasm. The enzyme catalyses L-methionine + ATP + H2O = S-adenosyl-L-methionine + phosphate + diphosphate. It functions in the pathway amino-acid biosynthesis; S-adenosyl-L-methionine biosynthesis; S-adenosyl-L-methionine from L-methionine: step 1/1. Functionally, catalyzes the formation of S-adenosylmethionine (AdoMet) from methionine and ATP. The overall synthetic reaction is composed of two sequential steps, AdoMet formation and the subsequent tripolyphosphate hydrolysis which occurs prior to release of AdoMet from the enzyme. The protein is S-adenosylmethionine synthase of Pectobacterium atrosepticum (strain SCRI 1043 / ATCC BAA-672) (Erwinia carotovora subsp. atroseptica).